Consider the following 247-residue polypeptide: 4-hydroxy-tetrahydrodipicolinate reductase (247 aa).

Residues 9 to 14 (GAAGRM), 76 to 78 (GTT), and 103 to 106 (APNF) contribute to the NAD(+) site. His-133 serves as the catalytic Proton donor/acceptor. A (S)-2,3,4,5-tetrahydrodipicolinate-binding site is contributed by His-134. Residue Lys-137 is the Proton donor of the active site. Position 143–144 (143–144 (GT)) interacts with (S)-2,3,4,5-tetrahydrodipicolinate.

It belongs to the DapB family.

The protein localises to the cytoplasm. It carries out the reaction (S)-2,3,4,5-tetrahydrodipicolinate + NAD(+) + H2O = (2S,4S)-4-hydroxy-2,3,4,5-tetrahydrodipicolinate + NADH + H(+). The enzyme catalyses (S)-2,3,4,5-tetrahydrodipicolinate + NADP(+) + H2O = (2S,4S)-4-hydroxy-2,3,4,5-tetrahydrodipicolinate + NADPH + H(+). It functions in the pathway amino-acid biosynthesis; L-lysine biosynthesis via DAP pathway; (S)-tetrahydrodipicolinate from L-aspartate: step 4/4. Functionally, catalyzes the conversion of 4-hydroxy-tetrahydrodipicolinate (HTPA) to tetrahydrodipicolinate. The protein is 4-hydroxy-tetrahydrodipicolinate reductase of Beutenbergia cavernae (strain ATCC BAA-8 / DSM 12333 / CCUG 43141 / JCM 11478 / NBRC 16432 / NCIMB 13614 / HKI 0122).